The following is a 235-amino-acid chain: MSVFTTLQQHIQRNGALIVSCQPVPGSPMDSPEIVAAMATAAAQAGAAALRIEGVANLQAVRPHVSLPIIGIIKRDLDESPVRITPFLRDIDDLVQAGADIIAFDGTQRPRPERREALLARIQHHGRLAMADCSSLEDGLYCQRLGCDFIGTTLSGYTHGETPCEPDFALVHALSNAGCRVIAEGRYNTPAQAAQALSQGAWAVTVGSAITRIEHICQWYCQALQAEAHHEYAGH.

This sequence belongs to the NanE family.

It carries out the reaction an N-acyl-D-glucosamine 6-phosphate = an N-acyl-D-mannosamine 6-phosphate. It functions in the pathway amino-sugar metabolism; N-acetylneuraminate degradation; D-fructose 6-phosphate from N-acetylneuraminate: step 3/5. Converts N-acetylmannosamine-6-phosphate (ManNAc-6-P) to N-acetylglucosamine-6-phosphate (GlcNAc-6-P). This chain is Putative N-acetylmannosamine-6-phosphate 2-epimerase, found in Edwardsiella ictaluri (strain 93-146).